A 109-amino-acid polypeptide reads, in one-letter code: Large ribosomal subunit protein uL24 (109 aa).

It belongs to the universal ribosomal protein uL24 family. Part of the 50S ribosomal subunit.

One of two assembly initiator proteins, it binds directly to the 5'-end of the 23S rRNA, where it nucleates assembly of the 50S subunit. Its function is as follows. One of the proteins that surrounds the polypeptide exit tunnel on the outside of the subunit. In Syntrophobacter fumaroxidans (strain DSM 10017 / MPOB), this protein is Large ribosomal subunit protein uL24.